The sequence spans 94 residues: DNA-directed RNA polymerase subunit omega (94 aa).

The protein belongs to the RNA polymerase subunit omega family. The RNAP catalytic core consists of 2 alpha, 1 beta, 1 beta' and 1 omega subunit. When a sigma factor is associated with the core the holoenzyme is formed, which can initiate transcription.

It carries out the reaction RNA(n) + a ribonucleoside 5'-triphosphate = RNA(n+1) + diphosphate. Functionally, promotes RNA polymerase assembly. Latches the N- and C-terminal regions of the beta' subunit thereby facilitating its interaction with the beta and alpha subunits. This chain is DNA-directed RNA polymerase subunit omega, found in Shewanella pealeana (strain ATCC 700345 / ANG-SQ1).